The chain runs to 311 residues: tRNA (guanine-N(7)-)-methyltransferase (311 aa).

S-adenosyl-L-methionine-binding residues include Glu-28, Glu-53, and Asp-103. The active site involves Asp-103. Residues Lys-107 and Asp-139 each contribute to the substrate site.

It belongs to the class I-like SAM-binding methyltransferase superfamily. TrmB family.

The enzyme catalyses guanosine(46) in tRNA + S-adenosyl-L-methionine = N(7)-methylguanosine(46) in tRNA + S-adenosyl-L-homocysteine. It participates in tRNA modification; N(7)-methylguanine-tRNA biosynthesis. Its function is as follows. Catalyzes the formation of N(7)-methylguanine at position 46 (m7G46) in tRNA. In Thermus thermophilus (strain ATCC BAA-163 / DSM 7039 / HB27), this protein is tRNA (guanine-N(7)-)-methyltransferase.